A 453-amino-acid chain; its full sequence is Chromosomal replication initiator protein DnaA (453 aa).

The domain I, interacts with DnaA modulators stretch occupies residues 1 to 74 (MKEKQFWNRI…GFEIYDAEIT (74 aa)). The segment at 74–113 (TPHYIFTKPQDTTSSQVEEATNLTLYDYSPKLVSIPYSDT) is domain II. Residues 114–331 (GLKEKYTFDN…GAINDITLIA (218 aa)) form a domain III, AAA+ region region. G158, G160, K161, and T162 together coordinate ATP. The segment at 332–453 (RVKKIKDITI…EIESIKKKIK (122 aa)) is domain IV, binds dsDNA.

The protein belongs to the DnaA family. As to quaternary structure, oligomerizes as a right-handed, spiral filament on DNA at oriC.

The protein resides in the cytoplasm. Plays an essential role in the initiation and regulation of chromosomal replication. ATP-DnaA binds to the origin of replication (oriC) to initiate formation of the DNA replication initiation complex once per cell cycle. Binds the DnaA box (a 9 base pair repeat at the origin) and separates the double-stranded (ds)DNA. Forms a right-handed helical filament on oriC DNA; dsDNA binds to the exterior of the filament while single-stranded (ss)DNA is stabiized in the filament's interior. The ATP-DnaA-oriC complex binds and stabilizes one strand of the AT-rich DNA unwinding element (DUE), permitting loading of DNA polymerase. After initiation quickly degrades to an ADP-DnaA complex that is not apt for DNA replication. Binds acidic phospholipids. This chain is Chromosomal replication initiator protein DnaA, found in Streptococcus pneumoniae (strain P1031).